Consider the following 520-residue polypeptide: Protein-export membrane protein SecD (520 aa).

Transmembrane regions (helical) follow at residues 10 to 30, 364 to 384, 391 to 411, 417 to 437, 461 to 481, and 483 to 503; these read IILLVIVVIVSLFALVSPTLA, DSLLAGLVAVFAVSGVVFLRY, LPMIVTALSEVLILLGFAAGI, LSVIAGFITVIGTGVDDLVII, FWVIGAAAATTIIAMSPLAIL, and LGDLQGFAIFTILGVLVGVLI.

This sequence belongs to the SecD/SecF family. SecD subfamily. Part of the protein translocation apparatus. Forms a complex with SecF.

Its subcellular location is the cell membrane. Functionally, involved in protein export. In Haloquadratum walsbyi (strain DSM 16790 / HBSQ001), this protein is Protein-export membrane protein SecD.